The chain runs to 275 residues: Large ribosomal subunit protein uL2 (275 aa).

Disordered stretches follow at residues Lys-36–Gly-55 and Val-223–Arg-275. Polar residues predominate over residues Lys-39–Arg-48. The segment covering Asp-229–Thr-239 has biased composition (basic and acidic residues).

It belongs to the universal ribosomal protein uL2 family. Part of the 50S ribosomal subunit. Forms a bridge to the 30S subunit in the 70S ribosome.

One of the primary rRNA binding proteins. Required for association of the 30S and 50S subunits to form the 70S ribosome, for tRNA binding and peptide bond formation. It has been suggested to have peptidyltransferase activity; this is somewhat controversial. Makes several contacts with the 16S rRNA in the 70S ribosome. This chain is Large ribosomal subunit protein uL2, found in Aromatoleum aromaticum (strain DSM 19018 / LMG 30748 / EbN1) (Azoarcus sp. (strain EbN1)).